The sequence spans 474 residues: Membrane-bound acylglycerophosphatidylinositol O-acyltransferase mboat7 (474 aa).

The Cytoplasmic segment spans residues 1 to 5 (MSPNE). The chain crosses the membrane as a helical span at residues 6–22 (LTYLAILLGSAPLGFLF). The Lumenal portion of the chain corresponds to 23-33 (KNGSPQVKQRG). Residues 34–57 (SAAVGVALTLITCHIHSLHSAITI) form a helical membrane-spanning segment. Topologically, residues 58–73 (LGTWLIIKILPRSCHF) are cytoplasmic. Residues 74–93 (PTLGWTFTYLLFFRTITYFD) form a helical membrane-spanning segment. Over 94-193 (IPAPTPFTNA…IPSWKPLVSR (100 aa)) the chain is Lumenal. The helical transmembrane segment at 194 to 211 (LKPAPVFGVLFLIASQYF) threads the bilayer. The Cytoplasmic segment spans residues 212-230 (PLDYVKTDEFYEQAFLYRL). A helical membrane pass occupies residues 231-260 (FYMVPTFFIFRMRFYVAWIFAECGCISAAF). The Lumenal segment spans residues 261–427 (GAYPVSAKSR…LTFTDTYRYW (167 aa)). N322 carries an N-linked (GlcNAc...) asparagine glycan. A helical transmembrane segment spans residues 428–448 (QSIYFSVHVLAISLFLLGRVL). Over 449–473 (ALKSPRRPRNTKEEKAEAKQENRLQ) the chain is Cytoplasmic.

It belongs to the membrane-bound acyltransferase family.

Its subcellular location is the endoplasmic reticulum membrane. The catalysed reaction is a 1-acyl-sn-glycero-3-phospho-(1D-myo-inositol) + (5Z,8Z,11Z,14Z)-eicosatetraenoyl-CoA = a 1-acyl-2-(5Z,8Z,11Z,14Z-eicosatetraenoyl)-sn-glycero-3-phospho-(1D-myo-inositol) + CoA. It carries out the reaction (5Z,8Z,11Z,14Z)-eicosatetraenoyl-CoA + 1-hexadecanoyl-sn-glycero-3-phosphocholine = 1-hexadecanoyl-2-(5Z,8Z,11Z,14Z-eicosatetraenoyl)-sn-glycero-3-phosphocholine + CoA. The enzyme catalyses a 1-acyl-sn-glycero-3-phospho-(1D-myo-inositol) + an acyl-CoA = a 1,2-diacyl-sn-glycero-3-phospho-(1D-myo-inositol) + CoA. It catalyses the reaction 1-octadecanoyl-sn-glycero-3-phospho-(1D-myo-inositol) + (5Z,8Z,11Z,14Z)-eicosatetraenoyl-CoA = 1-octadecanoyl-2-(5Z,8Z,11Z,14Z-eicosatetraenoyl)-sn-glycero-3-phospho-(1D-myo-inositol) + CoA. It functions in the pathway lipid metabolism; phospholipid metabolism. In terms of biological role, acyltransferase which catalyzes the transfer of an acyl group from an acyl-CoA to a lysophosphatidylinositol (1-acylglycerophosphatidylinositol or LPI) leading to the production of a phosphatidylinositol (1,2-diacyl-sn-glycero-3-phosphoinositol or PI) and participates in the reacylation step of the phospholipid remodeling pathway also known as the Lands cycle. Prefers arachidonoyl-CoA as the acyl donor, thus contributing to the regulation of free levels arachidonic acid in cell. The protein is Membrane-bound acylglycerophosphatidylinositol O-acyltransferase mboat7 (mboat7) of Xenopus laevis (African clawed frog).